Here is a 377-residue protein sequence, read N- to C-terminus: Nitric oxide reductase FlRd-NAD(+) reductase (377 aa).

It belongs to the FAD-dependent oxidoreductase family. FAD is required as a cofactor.

The protein localises to the cytoplasm. It carries out the reaction 2 reduced [nitric oxide reductase rubredoxin domain] + NAD(+) + H(+) = 2 oxidized [nitric oxide reductase rubredoxin domain] + NADH. The protein operates within nitrogen metabolism; nitric oxide reduction. In terms of biological role, one of at least two accessory proteins for anaerobic nitric oxide (NO) reductase. Reduces the rubredoxin moiety of NO reductase. The protein is Nitric oxide reductase FlRd-NAD(+) reductase of Escherichia coli O139:H28 (strain E24377A / ETEC).